A 288-amino-acid polypeptide reads, in one-letter code: Quinate/shikimate dehydrogenase (288 aa).

Substrate-binding residues include Lys-71 and Asp-107. Residues 132 to 135, 155 to 158, Lys-205, 232 to 235, and Gly-255 contribute to the NAD(+) site; these read AGGA, NRRD, and CVYN.

Belongs to the shikimate dehydrogenase family. Homodimer.

It carries out the reaction L-quinate + NAD(+) = 3-dehydroquinate + NADH + H(+). The catalysed reaction is L-quinate + NADP(+) = 3-dehydroquinate + NADPH + H(+). The enzyme catalyses shikimate + NADP(+) = 3-dehydroshikimate + NADPH + H(+). It catalyses the reaction shikimate + NAD(+) = 3-dehydroshikimate + NADH + H(+). It participates in metabolic intermediate biosynthesis; chorismate biosynthesis; chorismate from D-erythrose 4-phosphate and phosphoenolpyruvate: step 4/7. Its function is as follows. The actual biological function of YdiB remains unclear, nor is it known whether 3-dehydroshikimate or quinate represents the natural substrate. Catalyzes the reversible NAD-dependent reduction of both 3-dehydroshikimate (DHSA) and 3-dehydroquinate to yield shikimate (SA) and quinate, respectively. It can use both NAD or NADP for catalysis, however it has higher catalytic efficiency with NAD. In Escherichia coli O81 (strain ED1a), this protein is Quinate/shikimate dehydrogenase.